Reading from the N-terminus, the 527-residue chain is Secologanin synthase 2 (527 aa).

The Lumenal portion of the chain corresponds to 1–11; sequence MEMDMDIIRKA. The chain crosses the membrane as a helical span at residues 12–32; sequence IAATIFALVMAWAWRVLDWAW. Residues 33 to 527 lie on the Cytoplasmic side of the membrane; the sequence is FTPKRIEKRL…IYKKLERQNF (495 aa). C470 provides a ligand contact to heme.

It belongs to the cytochrome P450 family. Heme is required as a cofactor. As to expression, expressed in leaves (especially in leaf epidermis), and, to a lower extent, in roots, stems, flower buds and flowers.

It localises to the endoplasmic reticulum membrane. The catalysed reaction is loganin + reduced [NADPH--hemoprotein reductase] + O2 = secologanin + oxidized [NADPH--hemoprotein reductase] + 2 H2O + H(+). It carries out the reaction secologanin + reduced [NADPH--hemoprotein reductase] + O2 = secoxyloganin + oxidized [NADPH--hemoprotein reductase] + H2O + 2 H(+). It participates in alkaloid biosynthesis. Its function is as follows. Component of the seco-iridoid and derivatives monoterpenoid indole alkaloids (MIAs, e.g. secologanin) biosynthesis pathway. Catalyzes the conversion of loganin into secologanin. Catalyzes the conversion of secologanin into secoxyloganin. This Catharanthus roseus (Madagascar periwinkle) protein is Secologanin synthase 2.